Reading from the N-terminus, the 346-residue chain is D-alanine--D-alanine ligase (346 aa).

Residues 133-327 enclose the ATP-grasp domain; that stretch reads KLYAKSVGVK…ALADQISLEK (195 aa). 159-211 serves as a coordination point for ATP; it reads LSFPCIIKPARLGSSIGISIVKDEKDLEYAKDVGFEFDNDLVVEEFKNNIKEY. Mg(2+) contacts are provided by Asp-284, Glu-296, and Asn-298.

Belongs to the D-alanine--D-alanine ligase family. The cofactor is Mg(2+). It depends on Mn(2+) as a cofactor.

It localises to the cytoplasm. The catalysed reaction is 2 D-alanine + ATP = D-alanyl-D-alanine + ADP + phosphate + H(+). Its pathway is cell wall biogenesis; peptidoglycan biosynthesis. Functionally, cell wall formation. This is D-alanine--D-alanine ligase from Campylobacter jejuni subsp. jejuni serotype O:23/36 (strain 81-176).